The following is a 30-amino-acid chain: Cycloviolin-D (30 aa).

The cyclopeptide (Gly-Asn) cross-link spans 1–30; it reads GFPCGESCVFIPCISAAIGCSCKNKVCYRN. Disulfide bonds link Cys-4/Cys-20, Cys-8/Cys-22, and Cys-13/Cys-27.

This is a cyclic peptide.

Its function is as follows. Probably participates in a plant defense mechanism. Has anti-HIV activity. The chain is Cycloviolin-D from Leonia cymosa (Sacha uba).